Consider the following 697-residue polypeptide: Elongation factor G 2 (697 aa).

Residues 5-280 form the tr-type G domain; it reads SKYRNIGIFA…AVVDYLPAPD (276 aa). GTP is bound by residues 14–21, 78–82, and 132–135; these read AHVDAGKT, DTPGH, and NKLD.

Belongs to the TRAFAC class translation factor GTPase superfamily. Classic translation factor GTPase family. EF-G/EF-2 subfamily.

The protein localises to the cytoplasm. Functionally, catalyzes the GTP-dependent ribosomal translocation step during translation elongation. During this step, the ribosome changes from the pre-translocational (PRE) to the post-translocational (POST) state as the newly formed A-site-bound peptidyl-tRNA and P-site-bound deacylated tRNA move to the P and E sites, respectively. Catalyzes the coordinated movement of the two tRNA molecules, the mRNA and conformational changes in the ribosome. The sequence is that of Elongation factor G 2 (fusB) from Shewanella oneidensis (strain ATCC 700550 / JCM 31522 / CIP 106686 / LMG 19005 / NCIMB 14063 / MR-1).